Consider the following 359-residue polypeptide: Cinnamyl alcohol dehydrogenase 8 (359 aa).

Position 46 (Cys-46) interacts with Zn(2+). An NADP(+)-binding site is contributed by Ser-48. Residues His-68, Glu-69, Cys-99, Cys-102, Cys-105, Cys-113, and Cys-162 each coordinate Zn(2+). NADP(+)-binding positions include Thr-166, 187-192 (GLGGLG), 210-215 (STSEKK), Thr-250, Gly-274, and 297-299 (SMI).

This sequence belongs to the zinc-containing alcohol dehydrogenase family. In terms of assembly, homodimer. Zn(2+) serves as cofactor. As to expression, expressed in the differentiation and elongation zones of primary and lateral roots. Expressed in the hypocotyl, cotyledon veins, vasculature of the first rosette leaves, hydathodes and trichomes. In stems, expressed in the vascular cambium and developing xylem tissues. Expressed in the style, anthers, stamen filaments, stigmatic regions in flowers, and abscission and style regions of siliques.

The enzyme catalyses (E)-cinnamyl alcohol + NADP(+) = (E)-cinnamaldehyde + NADPH + H(+). It functions in the pathway aromatic compound metabolism; phenylpropanoid biosynthesis. In terms of biological role, involved in lignin biosynthesis. Catalyzes the final step specific for the production of lignin monomers. Catalyzes the NADPH-dependent reduction of coniferaldehyde, 5-hydroxyconiferaldehyde, sinapaldehyde, 4-coumaraldehyde and caffeyl aldehyde to their respective alcohols. In Arabidopsis thaliana (Mouse-ear cress), this protein is Cinnamyl alcohol dehydrogenase 8 (CAD8).